The following is a 359-amino-acid chain: Chorismate synthase (359 aa).

NADP(+) contacts are provided by Arg-48 and Arg-54. Residues 125–127 (RSS), 243–244 (NA), Gly-283, 298–302 (KPTSS), and Arg-324 contribute to the FMN site.

Belongs to the chorismate synthase family. As to quaternary structure, homotetramer. Requires FMNH2 as cofactor.

The catalysed reaction is 5-O-(1-carboxyvinyl)-3-phosphoshikimate = chorismate + phosphate. It functions in the pathway metabolic intermediate biosynthesis; chorismate biosynthesis; chorismate from D-erythrose 4-phosphate and phosphoenolpyruvate: step 7/7. Its function is as follows. Catalyzes the anti-1,4-elimination of the C-3 phosphate and the C-6 proR hydrogen from 5-enolpyruvylshikimate-3-phosphate (EPSP) to yield chorismate, which is the branch point compound that serves as the starting substrate for the three terminal pathways of aromatic amino acid biosynthesis. This reaction introduces a second double bond into the aromatic ring system. The protein is Chorismate synthase of Mannheimia succiniciproducens (strain KCTC 0769BP / MBEL55E).